We begin with the raw amino-acid sequence, 388 residues long: Chorismate synthase (388 aa).

2 residues coordinate NADP(+): arginine 39 and arginine 45. FMN is bound by residues 130-132, 251-252, glycine 296, 311-315, and arginine 337; these read RSS, NA, and KPIPT.

Belongs to the chorismate synthase family. In terms of assembly, homotetramer. The cofactor is FMNH2.

It carries out the reaction 5-O-(1-carboxyvinyl)-3-phosphoshikimate = chorismate + phosphate. It functions in the pathway metabolic intermediate biosynthesis; chorismate biosynthesis; chorismate from D-erythrose 4-phosphate and phosphoenolpyruvate: step 7/7. Catalyzes the anti-1,4-elimination of the C-3 phosphate and the C-6 proR hydrogen from 5-enolpyruvylshikimate-3-phosphate (EPSP) to yield chorismate, which is the branch point compound that serves as the starting substrate for the three terminal pathways of aromatic amino acid biosynthesis. This reaction introduces a second double bond into the aromatic ring system. The chain is Chorismate synthase from Geobacillus thermodenitrificans (strain NG80-2).